The sequence spans 201 residues: FMN-dependent NADH:quinone oxidoreductase (201 aa).

Residues serine 9 and 16–18 (SYS) each bind FMN.

Belongs to the azoreductase type 1 family. As to quaternary structure, homodimer. FMN is required as a cofactor.

The catalysed reaction is 2 a quinone + NADH + H(+) = 2 a 1,4-benzosemiquinone + NAD(+). It carries out the reaction N,N-dimethyl-1,4-phenylenediamine + anthranilate + 2 NAD(+) = 2-(4-dimethylaminophenyl)diazenylbenzoate + 2 NADH + 2 H(+). Functionally, quinone reductase that provides resistance to thiol-specific stress caused by electrophilic quinones. In terms of biological role, also exhibits azoreductase activity. Catalyzes the reductive cleavage of the azo bond in aromatic azo compounds to the corresponding amines. This chain is FMN-dependent NADH:quinone oxidoreductase, found in Mesomycoplasma hyopneumoniae (strain 7448) (Mycoplasma hyopneumoniae).